The sequence spans 44 residues: Thymosin beta (44 aa).

The interval 1-44 (MSDKHDKPDISEVTKFDKSKLKKTETHEKNPLPTKETIDQEKQG) is disordered. At Ser-2 the chain carries N-acetylserine.

As to expression, expressed in regenerating axons.

Its subcellular location is the cytoplasm. The protein resides in the cytoskeleton. Its function is as follows. Plays an important role in the organization of the cytoskeleton. Binds to and sequesters actin monomers (G actin) and therefore inhibits actin polymerization. May be involved in the regulation of structural plasticity in the CNS. In Aplysia californica (California sea hare), this protein is Thymosin beta.